A 489-amino-acid polypeptide reads, in one-letter code: Mitochondrial-processing peptidase subunit beta (489 aa).

A mitochondrion-targeting transit peptide spans 1–43 (MAAAAARVVLSSAARRRLWGFSESLLIRGAAGRSLYFGENRLR). A Zn(2+)-binding site is contributed by histidine 101. Glutamate 104 serves as the catalytic Proton acceptor. Residues histidine 105 and glutamate 181 each coordinate Zn(2+).

This sequence belongs to the peptidase M16 family. In terms of assembly, heterodimer of PMPCA (alpha) and PMPCB (beta) subunits, forming the mitochondrial processing protease (MPP) in which PMPCA is involved in substrate recognition and binding and PMPCB is the catalytic subunit. Zn(2+) is required as a cofactor.

The protein resides in the mitochondrion matrix. It catalyses the reaction Release of N-terminal transit peptides from precursor proteins imported into the mitochondrion, typically with Arg in position P2.. Its activity is regulated as follows. Binding to PMPCA is required for catalytic activity. In terms of biological role, catalytic subunit of the essential mitochondrial processing protease (MPP), which cleaves the mitochondrial sequence off newly imported precursors proteins. Preferentially, cleaves after an arginine at position P2. Required for PINK1 turnover by coupling PINK1 mitochondrial import and cleavage, which results in subsequent PINK1 proteolysis. In Homo sapiens (Human), this protein is Mitochondrial-processing peptidase subunit beta (PMPCB).